Reading from the N-terminus, the 431-residue chain is Glutamate-1-semialdehyde 2,1-aminomutase (431 aa).

Position 269 is an N6-(pyridoxal phosphate)lysine (K269).

It belongs to the class-III pyridoxal-phosphate-dependent aminotransferase family. HemL subfamily. As to quaternary structure, homodimer. Requires pyridoxal 5'-phosphate as cofactor.

It is found in the cytoplasm. The catalysed reaction is (S)-4-amino-5-oxopentanoate = 5-aminolevulinate. It functions in the pathway porphyrin-containing compound metabolism; protoporphyrin-IX biosynthesis; 5-aminolevulinate from L-glutamyl-tRNA(Glu): step 2/2. The chain is Glutamate-1-semialdehyde 2,1-aminomutase from Francisella tularensis subsp. tularensis (strain WY96-3418).